A 569-amino-acid chain; its full sequence is Glutamate--tRNA ligase (569 aa).

The 'HIGH' region motif lies at 110–120 (PNPNGPPTLGS).

The protein belongs to the class-I aminoacyl-tRNA synthetase family. Glutamate--tRNA ligase type 2 subfamily.

The protein resides in the cytoplasm. It catalyses the reaction tRNA(Glu) + L-glutamate + ATP = L-glutamyl-tRNA(Glu) + AMP + diphosphate. In terms of biological role, catalyzes the attachment of glutamate to tRNA(Glu) in a two-step reaction: glutamate is first activated by ATP to form Glu-AMP and then transferred to the acceptor end of tRNA(Glu). The sequence is that of Glutamate--tRNA ligase from Methanococcoides burtonii (strain DSM 6242 / NBRC 107633 / OCM 468 / ACE-M).